A 338-amino-acid polypeptide reads, in one-letter code: MEMO1 family protein MHO1 (338 aa).

It belongs to the MEMO1 family.

It is found in the cytoplasm. Its subcellular location is the nucleus. In terms of biological role, plays a role in haploid invasive growth under conditions of nutrient insufficiency, suggesting that the function of the MEMO1 family in cell motility/invasion is conserved across species. The polypeptide is MEMO1 family protein MHO1 (Saccharomyces cerevisiae (strain ATCC 204508 / S288c) (Baker's yeast)).